The following is a 553-amino-acid chain: 5'-nucleotidase (553 aa).

A signal peptide spans 1–21; it reads MKQGLILKSVLSAAIIASLAG. The N-palmitoyl cysteine moiety is linked to residue cysteine 22. Cysteine 22 carries S-diacylglycerol cysteine lipidation. Positions 45, 47, 88, 120, 221, 256, and 258 each coordinate a divalent metal cation. Substrate contacts are provided by residues phenylalanine 432 and 501–507; that span reads FNAAGGD.

Belongs to the 5'-nucleotidase family. It depends on chloride as a cofactor. Requires Mg(2+) as cofactor.

Its subcellular location is the cell outer membrane. It catalyses the reaction a ribonucleoside 5'-phosphate + H2O = a ribonucleoside + phosphate. Degradation of extracellular 5'-nucleotides for nutritional needs. The sequence is that of 5'-nucleotidase (nutA) from Vibrio cholerae serotype O1 (strain ATCC 39315 / El Tor Inaba N16961).